Reading from the N-terminus, the 222-residue chain is Putative N-acetylmannosamine-6-phosphate 2-epimerase (222 aa).

Belongs to the NanE family.

The enzyme catalyses an N-acyl-D-glucosamine 6-phosphate = an N-acyl-D-mannosamine 6-phosphate. Its pathway is amino-sugar metabolism; N-acetylneuraminate degradation; D-fructose 6-phosphate from N-acetylneuraminate: step 3/5. Functionally, converts N-acetylmannosamine-6-phosphate (ManNAc-6-P) to N-acetylglucosamine-6-phosphate (GlcNAc-6-P). The chain is Putative N-acetylmannosamine-6-phosphate 2-epimerase from Staphylococcus aureus (strain Mu3 / ATCC 700698).